The chain runs to 751 residues: Nibrin (751 aa).

The FHA domain maps to Y24–M83. 2 consecutive BRCT domains span residues K105–L181 and G224–I315. The tract at residues E111–Q328 is mediates interaction with SP100. The interval I221–N403 is interaction with MTOR, MAPKAP1 and RICTOR. Phosphothreonine is present on T337. Residue S343 is modified to Phosphoserine; by ATM. Phosphoserine is present on residues S347 and S398. A disordered region spans residues G389 to A418. S433 is subject to Phosphoserine; by CDK2. A Glycyl lysine isopeptide (Lys-Gly) (interchain with G-Cter in ubiquitin) cross-link involves residue K436. Disordered regions lie at residues K444–K479 and E491–K550. The span at W446 to N457 shows a compositional bias: polar residues. Residues P461–E467 carry the Nuclear localization signal motif. Basic and acidic residues-rich tracts occupy residues K502–D518 and E528–L539. A Phosphoserine modification is found at S508. Residues K569 and K580 each participate in a glycyl lysine isopeptide (Lys-Gly) (interchain with G-Cter in SUMO2) cross-link. The disordered stretch occupies residues V576–S645. Composition is skewed to basic and acidic residues over residues K577–R599 and E615–A636. Glycyl lysine isopeptide (Lys-Gly) (interchain with G-Cter in ubiquitin) cross-links involve residues K684, K688, and K733. The segment covering Q731–F742 has biased composition (basic and acidic residues). Residues Q731–R751 are disordered. The FxF/Y motif signature appears at A738–N747.

Belongs to the Nibrin family. Component of the MRN complex composed of two heterodimers RAD50 and MRE11 associated with a single NBN. The MRN complexes dimerize on DNA to form joined MRN-MRN oligomers required for DNA double-strand break repair. As part of the MRN complex, interacts with MCM9; the interaction recruits the complex to DNA repair sites. Component of the BASC complex, at least composed of BRCA1, MSH2, MSH6, MLH1, ATM, BLM, RAD50, MRE11 and NBN. Interacts with histone H2AX; this requires phosphorylation of H2AX on 'Ser-139' and promotes NBN recruitment to DNA damage sites. Interacts with (phosphorylated) MDC1; promoting NBN recruitment to DNA damage sites. Interacts with (phosphorylated) RAD17; promoting NBN recruitment to DNA damage sites. Interacts (via FxF/Y motif) with ATM. Interacts with HJURP. Interacts with INTS3. Interacts with KPNA2. Interacts with TERF2; interaction is disrupted upon NBN phosphorylation by CDK2. Interacts with (phosphorylated) RBBP8/CtIP; the interaction links the role of the MRN complex in DNA double-strand break sensing to resection. Interacts with SP100; recruits NBN to PML bodies. Interacts with ATF2. Interacts with MTOR, MAPKAP1 isoform 2 and RICTOR; indicative for an association with the mTORC2 complex. Interacts with MRNIP. Interacts with UFL1; promoting UFL1 recruitment to double-strand breaks following DNA damage. Interacts with CYREN (via XLF motif). Ubiquitinated at Lys-436 via 'Lys-6'-linked ubiquitin chains by RNF8, promoting NBN recruitment to DNA double-strand breaks (DSBs). Ubiquitinated at Lys-684 and Lys-688 via 'Lys-63'-linked ubiquitin chains by PELI1: ubiquitination takes place following PELI1 phosphorylation and promotes ATM activation and DNA repair. Ubiquitinated at Lys-733 via 'Lys-63'-linked ubiquitin chains by the SCF(SKP2) complex: ubiquitination takes place following SKP2 phosphorylation and promotes ATM activation and DNA repair. Post-translationally, phosphorylated by ATM in response of ionizing radiation, and such phosphorylation is responsible intra-S phase checkpoint control and telomere maintenance. Phosphorylated at Ser-433 by CDK2 in S/G2 phases abolishes interaction with TERF2, enabling DCLRE1B/Apollo recruitment to telomeres. Phosphorylation at Ser-433 in response to dysfunctional telomeres promotes non-homologous end joining repair at telomeres, while dephosphorylation by PPP1CA promotes microhomology-mediated end-joining (MMEJ) repair. In terms of tissue distribution, high expression in the liver, heart and testis. Low expression in all other tissues analyzed. In the cerebellum the postmitotic Purkinje cells are marked specifically.

The protein localises to the nucleus. The protein resides in the chromosome. It is found in the PML body. It localises to the telomere. Component of the MRN complex, which plays a central role in double-strand break (DSB) repair, DNA recombination, maintenance of telomere integrity and meiosis. The MRN complex is involved in the repair of DNA double-strand breaks (DSBs) via homologous recombination (HR), an error-free mechanism which primarily occurs during S and G2 phases. The complex (1) mediates the end resection of damaged DNA, which generates proper single-stranded DNA, a key initial steps in HR, and is (2) required for the recruitment of other repair factors and efficient activation of ATM and ATR upon DNA damage. The MRN complex possesses single-strand endonuclease activity and double-strand-specific 3'-5' exonuclease activity, which are provided by MRE11, to initiate end resection, which is required for single-strand invasion and recombination. Within the MRN complex, NBN acts as a protein-protein adapter, which specifically recognizes and binds phosphorylated proteins, promoting their recruitment to DNA damage sites. Recruits MRE11 and RAD50 components of the MRN complex to DSBs in response to DNA damage. Promotes the recruitment of PI3/PI4-kinase family members ATM, ATR, and probably DNA-PKcs to the DNA damage sites, activating their functions. Mediates the recruitment of phosphorylated RBBP8/CtIP to DSBs, leading to cooperation between the MRN complex and RBBP8/CtIP to initiate end resection. RBBP8/CtIP specifically promotes the endonuclease activity of the MRN complex to clear DNA ends containing protein adducts. The MRN complex is also required for the processing of R-loops. NBN also functions in telomere length maintenance via its interaction with TERF2: interaction with TERF2 during G1 phase preventing recruitment of DCLRE1B/Apollo to telomeres. NBN also promotes DNA repair choice at dysfunctional telomeres: NBN phosphorylation by CDK2 promotes non-homologous end joining repair at telomeres, while unphosphorylated NBN promotes microhomology-mediated end-joining (MMEJ) repair. Enhances AKT1 phosphorylation possibly by association with the mTORC2 complex. This is Nibrin from Mus musculus (Mouse).